The following is a 178-amino-acid chain: Oligoribonuclease (178 aa).

The 162-residue stretch at 7–168 folds into the Exonuclease domain; sequence LIWIDLEMTG…DDIRESIAEL (162 aa). The active site involves Tyr128.

This sequence belongs to the oligoribonuclease family.

The protein resides in the cytoplasm. In terms of biological role, 3'-to-5' exoribonuclease specific for small oligoribonucleotides. The polypeptide is Oligoribonuclease (Francisella tularensis subsp. holarctica (strain OSU18)).